The chain runs to 20 residues: 21 kDa cold shock-induced protein (20 aa).

A compositionally biased stretch (basic and acidic residues) spans 1-12 (TDSIKETIKETV). The tract at residues 1–20 (TDSIKETIKETVNHQAEWPY) is disordered.

The sequence is that of 21 kDa cold shock-induced protein from Streptococcus thermophilus.